Consider the following 175-residue polypeptide: tRNA-acetylating toxin 3 (175 aa).

Leu95, Val97, Gly103, Gly105, Gly107, Ala108, Asp133, Gln138, Asp141, and Trp142 together coordinate acetyl-CoA. Tyr143 is an active-site residue. Residues Gly145 and Phe146 each contribute to the acetyl-CoA site.

This sequence belongs to the acetyltransferase family. GNAT subfamily. In terms of assembly, homodimer (in absence of antitoxin); has a condensed and elongated form. Forms a complex with cognate antitoxin TacA3. Forms a 4:2 antitoxin:toxin complex with cognate antitoxin TacA3. Forms a 4:4 antitoxin:toxin complex with promoter DNA, where 2 TacT3 dimers bridge 2 TacA3 dimers. Only TacA3 contacts promoter DNA in the octomeric form. TacT3 may contact DNA in the hexameric form.

It carries out the reaction glycyl-tRNA(Gly) + acetyl-CoA = N-acetylglycyl-tRNA(Gly) + CoA + H(+). Its function is as follows. Toxic component of a type II toxin-antitoxin (TA) system. Acetylates tRNA and inhibits translation. Acetylates only Gly-tRNA on all 3 Gly-tRNA(Gly) isoacceptors in situ. In vitro acetylates mainly Ile/Leu and Gly. Overexpression during the lag phase of a tacA3-tacT3 deletion strain leads to a 150-fold increase in persister cells in the presence of cefotaxime and a non-growth state in the absence of antibiotic. Persister cell formation and the growth defect are neutralized by cognate antitoxin TacA3, but not by TacA1 or TacA2. Plays a role in persister cell formation. The TacA3-TacT3 complex both represses and derepresses expression of its own operon. The hexameric 4:2 TacA3-TacT3 complex binds promoter DNA and represses its transcription; both subunits are required. The octomeric 4:4 TacA3-TacT3 complex derepresses the operon. The shift from hexameric to octomeric complex probably alters DNA-binding, leading to dissociation from the operator DNA and derepression. The protein is tRNA-acetylating toxin 3 of Salmonella typhimurium (strain 14028s / SGSC 2262).